Reading from the N-terminus, the 200-residue chain is Recombination protein RecR (200 aa).

A C4-type zinc finger spans residues 57-72 (CSECRTFTEEDTCAIC). Residues 81–176 (GELCIVESPA…SASRIAHGVP (96 aa)) form the Toprim domain.

Belongs to the RecR family.

May play a role in DNA repair. It seems to be involved in an RecBC-independent recombinational process of DNA repair. It may act with RecF and RecO. The polypeptide is Recombination protein RecR (Aliivibrio salmonicida (strain LFI1238) (Vibrio salmonicida (strain LFI1238))).